The chain runs to 689 residues: Transcription termination factor Rho (689 aa).

The span at Met1–Thr20 shows a compositional bias: polar residues. Disordered regions lie at residues Met1–Val90 and Ala151–Asn213. The segment covering Pro52–Ala65 has biased composition (basic residues). Low complexity-rich tracts occupy residues Asn170–Glu183 and Asn191–Asn213. Residues Ile287 to Glu362 enclose the Rho RNA-BD domain. ATP-binding positions include Gly405–Ser410, Arg417–Val422, and Arg448.

The protein belongs to the Rho family. Homohexamer. The homohexamer assembles into an open ring structure.

Functionally, facilitates transcription termination by a mechanism that involves Rho binding to the nascent RNA, activation of Rho's RNA-dependent ATPase activity, and release of the mRNA from the DNA template. This chain is Transcription termination factor Rho, found in Fibrobacter succinogenes (strain ATCC 19169 / S85).